Consider the following 27-residue polypeptide: Urumin (27 aa).

In terms of tissue distribution, expressed by the skin glands.

It localises to the secreted. Its function is as follows. Amphibian peptide that shows viricidal activity against human H1N1 influenza A virus. It specifically targets the conserved stalk region of H1 hemagglutinin, and acts by actively destroying influenza virions. It shows a reduced activity on human H3N2 influenza A virus and no activity against other viruses (HIV, SIV, HSV-II, hepatitis C, Ebola, Zika, and Dengue viruses). In vivo, the peptide also protects mice infected with mouse-adapted influenza virus from lethal influenza infection. The peptide synthesized in D-amino acids is inactive. The protein is Urumin of Hydrophylax bahuvistara (Wide-spread fungoid frog).